Reading from the N-terminus, the 519-residue chain is ATP synthase subunit alpha (519 aa).

174-181 (GDRQTGKT) serves as a coordination point for ATP.

It belongs to the ATPase alpha/beta chains family. In terms of assembly, F-type ATPases have 2 components, CF(1) - the catalytic core - and CF(0) - the membrane proton channel. CF(1) has five subunits: alpha(3), beta(3), gamma(1), delta(1), epsilon(1). CF(0) has three main subunits: a(1), b(2) and c(9-12). The alpha and beta chains form an alternating ring which encloses part of the gamma chain. CF(1) is attached to CF(0) by a central stalk formed by the gamma and epsilon chains, while a peripheral stalk is formed by the delta and b chains.

The protein localises to the cell inner membrane. It carries out the reaction ATP + H2O + 4 H(+)(in) = ADP + phosphate + 5 H(+)(out). In terms of biological role, produces ATP from ADP in the presence of a proton gradient across the membrane. The alpha chain is a regulatory subunit. This is ATP synthase subunit alpha from Paracidovorax citrulli (strain AAC00-1) (Acidovorax citrulli).